The sequence spans 244 residues: tRNA pseudouridine synthase A (244 aa).

The active-site Nucleophile is Asp-52. Tyr-110 is a substrate binding site.

The protein belongs to the tRNA pseudouridine synthase TruA family. Homodimer.

It carries out the reaction uridine(38/39/40) in tRNA = pseudouridine(38/39/40) in tRNA. In terms of biological role, formation of pseudouridine at positions 38, 39 and 40 in the anticodon stem and loop of transfer RNAs. In Caldicellulosiruptor bescii (strain ATCC BAA-1888 / DSM 6725 / KCTC 15123 / Z-1320) (Anaerocellum thermophilum), this protein is tRNA pseudouridine synthase A.